A 228-amino-acid chain; its full sequence is ATP-dependent dethiobiotin synthetase BioD (228 aa).

An ATP-binding site is contributed by 13-18 (DVGKTV). Thr-17 lines the Mg(2+) pocket. Residue Lys-38 is part of the active site. Residues Asp-55, 116–119 (EGAG), 176–177 (NR), and 205–207 (PYI) contribute to the ATP site. Residues Asp-55 and Glu-116 each contribute to the Mg(2+) site.

The protein belongs to the dethiobiotin synthetase family. Homodimer. The cofactor is Mg(2+).

It is found in the cytoplasm. The catalysed reaction is (7R,8S)-7,8-diammoniononanoate + CO2 + ATP = (4R,5S)-dethiobiotin + ADP + phosphate + 3 H(+). The protein operates within cofactor biosynthesis; biotin biosynthesis; biotin from 7,8-diaminononanoate: step 1/2. Functionally, catalyzes a mechanistically unusual reaction, the ATP-dependent insertion of CO2 between the N7 and N8 nitrogen atoms of 7,8-diaminopelargonic acid (DAPA, also called 7,8-diammoniononanoate) to form a ureido ring. This Vibrio parahaemolyticus serotype O3:K6 (strain RIMD 2210633) protein is ATP-dependent dethiobiotin synthetase BioD.